Here is a 315-residue protein sequence, read N- to C-terminus: Lipoyl synthase (315 aa).

[4Fe-4S] cluster is bound by residues C62, C67, C73, C88, C92, C95, and S302. In terms of domain architecture, Radical SAM core spans 74-291 (FGKGTATFMI…ETEALAMGFK (218 aa)).

It belongs to the radical SAM superfamily. Lipoyl synthase family. [4Fe-4S] cluster serves as cofactor.

It is found in the cytoplasm. The catalysed reaction is [[Fe-S] cluster scaffold protein carrying a second [4Fe-4S](2+) cluster] + N(6)-octanoyl-L-lysyl-[protein] + 2 oxidized [2Fe-2S]-[ferredoxin] + 2 S-adenosyl-L-methionine + 4 H(+) = [[Fe-S] cluster scaffold protein] + N(6)-[(R)-dihydrolipoyl]-L-lysyl-[protein] + 4 Fe(3+) + 2 hydrogen sulfide + 2 5'-deoxyadenosine + 2 L-methionine + 2 reduced [2Fe-2S]-[ferredoxin]. The protein operates within protein modification; protein lipoylation via endogenous pathway; protein N(6)-(lipoyl)lysine from octanoyl-[acyl-carrier-protein]: step 2/2. Functionally, catalyzes the radical-mediated insertion of two sulfur atoms into the C-6 and C-8 positions of the octanoyl moiety bound to the lipoyl domains of lipoate-dependent enzymes, thereby converting the octanoylated domains into lipoylated derivatives. The sequence is that of Lipoyl synthase from Aromatoleum aromaticum (strain DSM 19018 / LMG 30748 / EbN1) (Azoarcus sp. (strain EbN1)).